Reading from the N-terminus, the 50-residue chain is Large ribosomal subunit protein bL33B (50 aa).

The protein belongs to the bacterial ribosomal protein bL33 family.

The polypeptide is Large ribosomal subunit protein bL33B (Ligilactobacillus salivarius (strain UCC118) (Lactobacillus salivarius)).